The following is a 71-amino-acid chain: Small ribosomal subunit protein bS21 (71 aa).

Basic residues predominate over residues 48–59; sequence AKASAVKRHAKK. A disordered region spans residues 48–71; it reads AKASAVKRHAKKLSRENARRIRLY. Basic and acidic residues predominate over residues 60–71; that stretch reads LSRENARRIRLY.

The protein belongs to the bacterial ribosomal protein bS21 family.

The protein is Small ribosomal subunit protein bS21 of Aeromonas hydrophila subsp. hydrophila (strain ATCC 7966 / DSM 30187 / BCRC 13018 / CCUG 14551 / JCM 1027 / KCTC 2358 / NCIMB 9240 / NCTC 8049).